A 139-amino-acid polypeptide reads, in one-letter code: UPF0216 protein MJ1224 (139 aa).

This sequence belongs to the UPF0216 family.

The polypeptide is UPF0216 protein MJ1224 (Methanocaldococcus jannaschii (strain ATCC 43067 / DSM 2661 / JAL-1 / JCM 10045 / NBRC 100440) (Methanococcus jannaschii)).